The chain runs to 429 residues: Cytochrome bc1 complex Rieske iron-sulfur subunit (429 aa).

Residues 1-45 are disordered; the sequence is MSRADDDAVGVPPTCGGRSDEEERRIVPGPNPQDGAKDGAKATAV. 3 helical membrane-spanning segments follow: residues 96-116, 137-157, and 207-227; these read VAVW…IFLF, PLYG…AVLY, and FGVG…GGLI. In terms of domain architecture, Rieske spans 316 to 410; the sequence is RNPVMLIRIK…ITIDTDGYLV (95 aa). 4 residues coordinate [2Fe-2S] cluster: cysteine 353, histidine 355, cysteine 372, and histidine 375. Cysteine 358 and cysteine 374 form a disulfide bridge.

It belongs to the Rieske iron-sulfur protein family. The cytochrome bc1 complex is composed of a cytochrome b (QcrB), the Rieske iron-sulfur protein (QcrA) and a diheme cytochrome c (QcrC) subunit. [2Fe-2S] cluster is required as a cofactor.

The protein resides in the cell membrane. Its function is as follows. Iron-sulfur subunit of the cytochrome bc1 complex, an essential component of the respiratory electron transport chain required for ATP synthesis. The bc1 complex catalyzes the oxidation of menaquinol and the reduction of cytochrome c in the respiratory chain. The bc1 complex operates through a Q-cycle mechanism that couples electron transfer to generation of the proton gradient that drives ATP synthesis. The protein is Cytochrome bc1 complex Rieske iron-sulfur subunit (qcrA) of Mycobacterium tuberculosis (strain CDC 1551 / Oshkosh).